The sequence spans 371 residues: MSKRDYYEVLGLSKGASKDEIKKAYRRLAKKYHPDVSKEENAIEKFKEVQEAYEVLSDDQKRAQYDQFGHAGANQGFGGFGGGGDFGGGFGFEDIFSSFFGGGGGRRRDPNAPRQGADLQYQVTLEFEEAIFGKELNVEIPVEDPCDTCKGSGAKPGTSKETCKHCSGSGQVSVEQNTPFGRIVNRQACSHCSGTGQMIKEKCTTCHGSGKVRKRKKINVKIPAGIDNGQQIRVSGKGEAGVNGGPAGDLYVVVHVRSHEFFEREGDHIICEMPLTFAQMALGAEVEVPTVHGKVKLKIPAGTQTGTEFRLKGKGAPNVRGYGQGDQYVVVRVVVPTKLTSHQKDLLREFAGQEEQDDSLFGKLKRAFKGE.

The J domain occupies 5–69 (DYYEVLGLSK…QKRAQYDQFG (65 aa)). The CR-type zinc finger occupies 133–215 (GKELNVEIPV…CHGSGKVRKR (83 aa)). Cys146, Cys149, Cys163, Cys166, Cys189, Cys192, Cys203, and Cys206 together coordinate Zn(2+). CXXCXGXG motif repeat units lie at residues 146 to 153 (CDTCKGSG), 163 to 170 (CKHCSGSG), 189 to 196 (CSHCSGTG), and 203 to 210 (CTTCHGSG).

Belongs to the DnaJ family. As to quaternary structure, homodimer. The cofactor is Zn(2+).

It is found in the cytoplasm. Participates actively in the response to hyperosmotic and heat shock by preventing the aggregation of stress-denatured proteins and by disaggregating proteins, also in an autonomous, DnaK-independent fashion. Unfolded proteins bind initially to DnaJ; upon interaction with the DnaJ-bound protein, DnaK hydrolyzes its bound ATP, resulting in the formation of a stable complex. GrpE releases ADP from DnaK; ATP binding to DnaK triggers the release of the substrate protein, thus completing the reaction cycle. Several rounds of ATP-dependent interactions between DnaJ, DnaK and GrpE are required for fully efficient folding. Also involved, together with DnaK and GrpE, in the DNA replication of plasmids through activation of initiation proteins. The polypeptide is Chaperone protein DnaJ (Bacillus anthracis (strain A0248)).